We begin with the raw amino-acid sequence, 435 residues long: Xylose isomerase (435 aa).

Residues His-99 and Asp-102 contribute to the active site. Residues Glu-230, Glu-266, His-269, Asp-294, Asp-305, Asp-307, and Asp-337 each contribute to the Mg(2+) site.

It belongs to the xylose isomerase family. In terms of assembly, homotetramer. The cofactor is Mg(2+).

Its subcellular location is the cytoplasm. It carries out the reaction alpha-D-xylose = alpha-D-xylulofuranose. This is Xylose isomerase from Enterococcus faecalis (strain ATCC 700802 / V583).